A 596-amino-acid polypeptide reads, in one-letter code: Pescadillo homolog (596 aa).

Positions 347–440 constitute a BRCT domain; that stretch reads PTSTLFSEFV…ELVPANLYLP (94 aa). Positions 449–552 are disordered; it reads SPWGDSVGYD…EEKDLKLIMM (104 aa). A coiled-coil region spans residues 460 to 596; that stretch reads AAELAEEEAE…TKAKLKKLEN (137 aa). Residues 463 to 500 show a composition bias toward acidic residues; it reads LAEEEAESEEEEEVSDEAEGDEEATLAAEEDEEDEAEA. The span at 501–510 shows a compositional bias: basic and acidic residues; the sequence is EELRAQKELE. A compositionally biased stretch (low complexity) spans 519 to 529; that stretch reads SEAADSAAPSK.

Belongs to the pescadillo family. As to quaternary structure, component of the NOP7 complex, composed of ERB1, NOP7 and YTM1. The complex is held together by ERB1, which interacts with NOP7 via its N-terminal domain and with YTM1 via a high-affinity interaction between the seven-bladed beta-propeller domains of the 2 proteins. The NOP7 complex associates with the 66S pre-ribosome.

The protein localises to the nucleus. The protein resides in the nucleolus. It is found in the nucleoplasm. Its function is as follows. Component of the NOP7 complex, which is required for maturation of the 25S and 5.8S ribosomal RNAs and formation of the 60S ribosome. This Eremothecium gossypii (strain ATCC 10895 / CBS 109.51 / FGSC 9923 / NRRL Y-1056) (Yeast) protein is Pescadillo homolog.